The following is a 731-amino-acid chain: Inclusion body clearance protein IML2 (731 aa).

Positions 1–26 (MFRVFGSFGSKGNQSSGEEQSTKTKQ) are disordered. The span at 10–26 (SKGNQSSGEEQSTKTKQ) shows a compositional bias: polar residues. Residues Ser265, Ser268, and Ser378 each carry the phosphoserine modification. Phosphothreonine is present on Thr380. Ser383 and Ser392 each carry phosphoserine.

It belongs to the IML2 family. As to quaternary structure, interacts with lipid droplet proteins PET10 and PDR16.

It localises to the cytoplasm. The protein resides in the nucleus. Functionally, inclusion body (IB) resident protein that interacts strongly with lipid droplet (LD) proteins. Involved in LD-mediated IB clearing after protein folding stress, probably by enabling access to the IBs of an LD-stored soluble sterol derivative that acts as a chaperone in inclusion clearing. The protein is Inclusion body clearance protein IML2 of Saccharomyces cerevisiae (strain ATCC 204508 / S288c) (Baker's yeast).